A 93-amino-acid polypeptide reads, in one-letter code: Large ribosomal subunit protein uL23cz/uL23cy (93 aa).

This sequence belongs to the universal ribosomal protein uL23 family. As to quaternary structure, part of the 50S ribosomal subunit.

Its subcellular location is the plastid. The protein resides in the chloroplast. In terms of biological role, binds to 23S rRNA. The chain is Large ribosomal subunit protein uL23cz/uL23cy (rpl23-A) from Gossypium barbadense (Sea Island cotton).